Reading from the N-terminus, the 456-residue chain is tRNA modification GTPase MnmE (456 aa).

Arg-25, Glu-82, and Lys-121 together coordinate (6S)-5-formyl-5,6,7,8-tetrahydrofolate. The TrmE-type G domain maps to 217 to 379 (GIKVVIIGKP…LLDEIVKIAG (163 aa)). Residue Asn-227 coordinates K(+). GTP is bound by residues 227–232 (NAGKSS), 246–252 (TDIAGTT), and 271–274 (DTAG). Ser-231 provides a ligand contact to Mg(2+). K(+)-binding residues include Thr-246, Ile-248, and Thr-251. Mg(2+) is bound at residue Thr-252. (6S)-5-formyl-5,6,7,8-tetrahydrofolate is bound at residue Lys-456.

This sequence belongs to the TRAFAC class TrmE-Era-EngA-EngB-Septin-like GTPase superfamily. TrmE GTPase family. Homodimer. Heterotetramer of two MnmE and two MnmG subunits. K(+) serves as cofactor.

Its subcellular location is the cytoplasm. Exhibits a very high intrinsic GTPase hydrolysis rate. Involved in the addition of a carboxymethylaminomethyl (cmnm) group at the wobble position (U34) of certain tRNAs, forming tRNA-cmnm(5)s(2)U34. This chain is tRNA modification GTPase MnmE, found in Endomicrobium trichonymphae.